The chain runs to 349 residues: Ion-translocating oxidoreductase complex subunit D (349 aa).

Transmembrane regions (helical) follow at residues 36 to 56 (CAFF…VALS), 77 to 99 (SAML…WMIV), and 124 to 144 (AMAA…SWIA). Threonine 185 is modified (FMN phosphoryl threonine). 5 consecutive transmembrane segments (helical) span residues 212–232 (GTGV…LVLL), 239–259 (WHIS…GFLL), 265–285 (ASPL…FIAT), 291–311 (ATSP…VYVI), and 315–335 (GGYP…APFI).

This sequence belongs to the NqrB/RnfD family. As to quaternary structure, the complex is composed of six subunits: RnfA, RnfB, RnfC, RnfD, RnfE and RnfG. FMN serves as cofactor.

The protein resides in the cell inner membrane. In terms of biological role, part of a membrane-bound complex that couples electron transfer with translocation of ions across the membrane. This Shewanella sp. (strain MR-4) protein is Ion-translocating oxidoreductase complex subunit D.